We begin with the raw amino-acid sequence, 267 residues long: Chaperone protein MyfB (267 aa).

The first 34 residues, 1-34, serve as a signal peptide directing secretion; it reads MKYKFSHNFISYNLFLFVFMSLILLPYSHASSMG. The cysteines at positions 127 and 164 are disulfide-linked.

It belongs to the periplasmic pilus chaperone family.

It localises to the periplasm. Its function is as follows. Required for the biogenesis of the MyfA fimbria. The polypeptide is Chaperone protein MyfB (myfB) (Yersinia enterocolitica).